Consider the following 321-residue polypeptide: Beta-porphyranase B (321 aa).

Residues 1–20 (MRKTVLYLSAASLFLSSYTL) form the signal peptide. The region spanning 31–319 (EHIKNLPEAP…WVRAYKLVPI (289 aa)) is the GH16 domain. The substrate site is built by Trp-72, Arg-76, Glu-173, Glu-178, and Glu-284. Catalysis depends on Glu-173, which acts as the Nucleophile. The active-site Proton donor is Glu-178.

It belongs to the glycosyl hydrolase 16 family.

The enzyme catalyses Hydrolysis of beta-D-galactopyranose-(1-&gt;4)-alpha-L-galactopyranose-6-sulfate linkages in porphyran.. Functionally, cleaves the sulfated polysaccharide porphyran at the (1-&gt;4) linkages between beta-D-galactopyranose and alpha-L-galactopyranose-6-sulfate, forming mostly the disaccharide alpha-L-galactopyranose-6-sulfate-(1-&gt;3)-beta-D-galactose. Some longer oligosaccharides of even number of residues are also observed. Inactive on the non-sulfated agarose portion of the porphyran backbone. This is Beta-porphyranase B from Phocaeicola plebeius (strain DSM 17135 / JCM 12973 / CCUG 54634 / M2) (Bacteroides plebeius).